Consider the following 562-residue polypeptide: Protein FAM83D-A (562 aa).

A disordered region spans residues 424 to 471; it reads ITTQTTETSQCTTQTPAPTSSVARLSNSSNSSSSSFSSTSITSTGSNC. The segment covering 425-471 has biased composition (low complexity); that stretch reads TTQTTETSQCTTQTPAPTSSVARLSNSSNSSSSSFSSTSITSTGSNC.

Belongs to the FAM83 family.

Its subcellular location is the cytoplasm. The protein localises to the cytoskeleton. It is found in the spindle. The protein resides in the spindle pole. In terms of biological role, may regulate cell proliferation, growth, migration and epithelial to mesenchymal transition. May also be important for proper chromosome congression and alignment during mitosis. The protein is Protein FAM83D-A of Xenopus laevis (African clawed frog).